The chain runs to 560 residues: Protein NRT1/ PTR FAMILY 2.5 (560 aa).

The segment at 1 to 20 is disordered; it reads MADSKSGDTEVAHRSSDPSE. A run of 12 helical transmembrane segments spans residues 34 to 54, 77 to 97, 101 to 121, 141 to 161, 177 to 197, 207 to 227, 323 to 343, 372 to 392, 404 to 424, 441 to 461, 480 to 500, and 520 to 540; these read TLLG…VFLI, MLPV…PVIS, FISL…YLMP, ILYV…FTLA, FFNW…TAIV, LGFG…IAGV, AILR…PVAV, VIVL…IYPM, LQQV…SAVV, VLWL…HFPA, SLTS…IDVI, and YWVV…CSWF.

This sequence belongs to the major facilitator superfamily. Proton-dependent oligopeptide transporter (POT/PTR) (TC 2.A.17) family. In terms of tissue distribution, expressed in the root epidermis or cortex.

Its subcellular location is the membrane. In terms of biological role, transporter involved in a passive nitrate efflux. The protein is Protein NRT1/ PTR FAMILY 2.5 (NPF2.5) of Arabidopsis thaliana (Mouse-ear cress).